A 424-amino-acid chain; its full sequence is Histidine--tRNA ligase (424 aa).

Belongs to the class-II aminoacyl-tRNA synthetase family. As to quaternary structure, homodimer.

It is found in the cytoplasm. The enzyme catalyses tRNA(His) + L-histidine + ATP = L-histidyl-tRNA(His) + AMP + diphosphate + H(+). This is Histidine--tRNA ligase from Salmonella paratyphi B (strain ATCC BAA-1250 / SPB7).